The following is a 354-amino-acid chain: 3-isopropylmalate dehydrogenase (354 aa).

76–87 (GPRWDGAKERPE) serves as a coordination point for NAD(+). Substrate-binding residues include Arg-94, Arg-104, Arg-130, and Asp-215. Mg(2+) is bound by residues Asp-215, Asp-239, and Asp-243. 273-285 (GSAPDIAGKNKAN) contributes to the NAD(+) binding site.

It belongs to the isocitrate and isopropylmalate dehydrogenases family. LeuB type 1 subfamily. As to quaternary structure, homodimer. Requires Mg(2+) as cofactor. Mn(2+) is required as a cofactor.

It is found in the cytoplasm. The enzyme catalyses (2R,3S)-3-isopropylmalate + NAD(+) = 4-methyl-2-oxopentanoate + CO2 + NADH. The protein operates within amino-acid biosynthesis; L-leucine biosynthesis; L-leucine from 3-methyl-2-oxobutanoate: step 3/4. Catalyzes the oxidation of 3-carboxy-2-hydroxy-4-methylpentanoate (3-isopropylmalate) to 3-carboxy-4-methyl-2-oxopentanoate. The product decarboxylates to 4-methyl-2 oxopentanoate. This is 3-isopropylmalate dehydrogenase from Bacillus cereus (strain ZK / E33L).